The chain runs to 123 residues: Small ribosomal subunit protein uS11 (123 aa).

This sequence belongs to the universal ribosomal protein uS11 family. Part of the 30S ribosomal subunit. Interacts with proteins S7 and S18. Binds to IF-3.

Its function is as follows. Located on the platform of the 30S subunit, it bridges several disparate RNA helices of the 16S rRNA. Forms part of the Shine-Dalgarno cleft in the 70S ribosome. The chain is Small ribosomal subunit protein uS11 from Coxiella burnetii (strain CbuG_Q212) (Coxiella burnetii (strain Q212)).